Here is a 7603-residue protein sequence, read N- to C-terminus: Cysteine repeat modular protein B (7603 aa).

A glycan (N-linked (GlcNAc...) asparagine) is linked at N172. A helical transmembrane segment spans residues 223 to 243 (LVGFFLVPVFVVFFVLSSDAT). Disordered regions lie at residues 248–275 (GVGVLSARADREEKSSVSSSSRASSSPG) and 291–323 (RDTKAAGYTGRSSRRSARARRRRAADGGEGKGF). The span at 263-275 (SVSSSSRASSSPG) shows a compositional bias: low complexity. Basic residues predominate over residues 302 to 313 (SSRRSARARRRR). N-linked (GlcNAc...) asparagine glycosylation is found at N329, N589, N848, N1128, N1183, and N1402. The segment at 1554–1574 (VLRSRSGPSHPSSVSQPSPSF) is disordered. Positions 1557–1573 (SRSGPSHPSSVSQPSPS) are enriched in low complexity. N1622, N2578, N2664, N3094, and N3126 each carry an N-linked (GlcNAc...) asparagine glycan. The tract at residues 3316–3445 (SNAVPEADEN…SDLTTSQPED (130 aa)) is disordered. Residues 3321-3340 (EADENQVESAEPEQNAEGET) are compositionally biased toward acidic residues. The segment covering 3342 to 3360 (EQGAEEAGGNAAEPGAESG) has biased composition (low complexity). N-linked (GlcNAc...) asparagine glycosylation is found at N3546, N4367, N4823, N4901, N5186, N5546, and N5666. The segment at 5758–5799 (LAESRSDDGTVGDDVDLDDNALSGTTNSGWTTSSSNSERVRK) is disordered. Residues 5767 to 5776 (TVGDDVDLDD) show a composition bias toward acidic residues. Low complexity predominate over residues 5780-5794 (SGTTNSGWTTSSSNS). N-linked (GlcNAc...) asparagine glycans are attached at residues N5806, N5876, N5998, N6055, and N6369. The tract at residues 6043 to 6115 (GEADHTPADG…EASEAESVSA (73 aa)) is disordered. A compositionally biased stretch (polar residues) spans 6051-6060 (DGSSNSSEDS). Positions 6391–6405 (EFTDTGPAPDDHTDE) are enriched in basic and acidic residues. Residues 6391–6436 (EFTDTGPAPDDHTDEGGANLDSTGGSGEPSSSAPVDPSGENEGQLL) form a disordered region. Polar residues predominate over residues 6410–6423 (LDSTGGSGEPSSSA). N6453 is a glycosylation site (N-linked (GlcNAc...) asparagine). Helical transmembrane passes span 6520-6540 (IFILMRLVVCGIIWIITALTI), 6552-6572 (VLIRIVMSHMFFLSVYGLMPA), 6578-6598 (LAGWASIYRLFFFEFYFALHP), 6627-6647 (IFVPFIDAVLLTIIGAICVAT), 6770-6790 (LILGGVGLLVWGVGSIAGFVA), 6831-6851 (CVALIITMYVHANASGAQEIF), 6888-6908 (GLMVNIIIGVIFQGSYYFEVF), and 6912-6932 (GAIPLAVAIFYYLYVLWSLFV). N-linked (GlcNAc...) asparagine glycosylation is present at N7013. The chain crosses the membrane as a helical span at residues 7017 to 7037 (FVAALSDSLSQLVIAWCQFTI). A glycan (N-linked (GlcNAc...) asparagine) is linked at N7061. Positions 7174-7242 (APQLRKENHA…RGLIESEIDD (69 aa)) form a coiled coil. Residues 7379-7603 (AAPAAGLRSH…LKKPGSPKQE (225 aa)) form a disordered region. Polar residues predominate over residues 7408–7417 (LGTNLSTPSA). N7411 carries an N-linked (GlcNAc...) asparagine glycan. 3 stretches are compositionally biased toward low complexity: residues 7474 to 7496 (PTPSRSPSGTTRTVGSVVRSVTP), 7509 to 7541 (SEAPLISPSASSLASPRSLSPLTERRGSQSSDL), and 7560 to 7582 (GEAAPAEAPSPSPRSSSPLAAQP).

As to quaternary structure, component of a complex, at least composed of cysteine repeat modular protein A (CRMPa), cysteine repeat modular protein B (CRMPb), micronemal protein 15 (MIC15) and thrombospondin type 1 domain-containing protein (TSP1).

It is found in the cell membrane. The protein resides in the endoplasmic reticulum. The protein localises to the golgi apparatus. Required for triggering rhoptry secretion. Plays a role in host cell invasion. The chain is Cysteine repeat modular protein B from Toxoplasma gondii.